Reading from the N-terminus, the 234-residue chain is MYKRVLLKLSGEVLSGEDQKGFNEEHVEYLIKEIKGISEYGTKLGIVIGAGNIFRGRDFEGLRPTISDQIGMLGTVINALYLKDRFENAGIRTVIVSQIVTLPSVKLINYDDIDLYFDAGYVVIFAGGTSNPFFTTDTGAALRAVEMKAELLIKGTKVCGIYDKDPKKYSDAKKYNVITYDEAIEKNLKIMDTEAFSICKRYNMKILVMNFFENGNLLKAIKGENVGTLVVPKV.

ATP is bound by residues 8 to 11, glycine 51, and arginine 55; that span reads KLSG. UMP-binding positions include aspartate 68 and 129–136; that span reads TSNPFFTT. Residues threonine 156, tyrosine 162, and aspartate 165 each contribute to the ATP site.

The protein belongs to the UMP kinase family. In terms of assembly, homohexamer.

It is found in the cytoplasm. It carries out the reaction UMP + ATP = UDP + ADP. It functions in the pathway pyrimidine metabolism; CTP biosynthesis via de novo pathway; UDP from UMP (UMPK route): step 1/1. Its activity is regulated as follows. Inhibited by UTP. Functionally, catalyzes the reversible phosphorylation of UMP to UDP. This chain is Uridylate kinase, found in Fervidobacterium nodosum (strain ATCC 35602 / DSM 5306 / Rt17-B1).